The sequence spans 464 residues: Cysteine--tRNA ligase (464 aa).

Cysteine 28 contributes to the Zn(2+) binding site. The 'HIGH' region motif lies at 30–40 (ITAYDFCHIGH). Residues cysteine 210, histidine 235, and glutamate 239 each contribute to the Zn(2+) site. The short motif at 267–271 (KMSKS) is the 'KMSKS' region element. Lysine 270 is a binding site for ATP.

Belongs to the class-I aminoacyl-tRNA synthetase family. In terms of assembly, monomer. The cofactor is Zn(2+).

It is found in the cytoplasm. It carries out the reaction tRNA(Cys) + L-cysteine + ATP = L-cysteinyl-tRNA(Cys) + AMP + diphosphate. This Buchnera aphidicola subsp. Baizongia pistaciae (strain Bp) protein is Cysteine--tRNA ligase.